The primary structure comprises 263 residues: Ribosomal RNA small subunit methyltransferase A (263 aa).

The S-adenosyl-L-methionine site is built by Asn13, Thr15, Gly40, Glu61, Asp85, and Asn105.

This sequence belongs to the class I-like SAM-binding methyltransferase superfamily. rRNA adenine N(6)-methyltransferase family. RsmA subfamily.

Its subcellular location is the cytoplasm. It carries out the reaction adenosine(1518)/adenosine(1519) in 16S rRNA + 4 S-adenosyl-L-methionine = N(6)-dimethyladenosine(1518)/N(6)-dimethyladenosine(1519) in 16S rRNA + 4 S-adenosyl-L-homocysteine + 4 H(+). Functionally, specifically dimethylates two adjacent adenosines (A1518 and A1519) in the loop of a conserved hairpin near the 3'-end of 16S rRNA in the 30S particle. May play a critical role in biogenesis of 30S subunits. The protein is Ribosomal RNA small subunit methyltransferase A of Mycoplasma pneumoniae (strain ATCC 29342 / M129 / Subtype 1) (Mycoplasmoides pneumoniae).